The sequence spans 246 residues: Complement C1q tumor necrosis factor-related protein 3 (246 aa).

An N-terminal signal peptide occupies residues 1–22; sequence MLGRQRIWWHLLPLLFLPFCLC. One can recognise a Collagen-like domain in the interval 51–113; that stretch reads GYQGPPGPPG…KGEKGYPGVP (63 aa). The tract at residues 53–112 is disordered; it reads QGPPGPPGPPGIPGNHGNNGNNGATGHEGAKGEKGDKGDLGPRGERGQHGPKGEKGYPGV. Pro residues predominate over residues 55–64; sequence PPGPPGPPGI. The segment covering 65–74 has biased composition (low complexity); the sequence is PGNHGNNGNN. Over residues 80–107 the composition is skewed to basic and acidic residues; sequence EGAKGEKGDKGDLGPRGERGQHGPKGEK. A C1q domain is found at 113 to 246; that stretch reads PPELQIAFMA…FAGFLLFETK (134 aa).

It is found in the secreted. The chain is Complement C1q tumor necrosis factor-related protein 3 (C1qtnf3) from Mus musculus (Mouse).